The primary structure comprises 662 residues: PsbB mRNA maturation factor Mbb1, chloroplastic (662 aa).

The N-terminal 50 residues, 1–50 (MSLVPFSQLWRGVRTRGPVEQASSSSSSSSSSRRTWYAPARSQTGVQVAA), are a transit peptide targeting the chloroplast. 2 disordered regions span residues 14 to 38 (RTRG…TWYA) and 75 to 101 (IIAD…RDEA). Low complexity predominate over residues 23-32 (SSSSSSSSSS). Residues 88 to 101 (EGERGDATGSRDEA) show a composition bias toward basic and acidic residues. TPR repeat units lie at residues 126-160 (SRIR…DPAD), 161-194 (PRAY…TGNV), 196-229 (PYIW…DGTH), 231-263 (CAWH…CRRK), 269-302 (AYLY…AEGA), 305-338 (VALW…NPRS), 339-372 (RYVH…NPTD), 373-406 (PALY…DPSD), 408-440 (YMWQ…DPRS), and 444-477 (VYVF…DPKS). Disordered regions lie at residues 540–563 (SDGN…EAAA) and 598–662 (LPDF…RSMG).

In terms of assembly, part of a 300 kDa complex that associates with RNA.

It is found in the plastid. The protein localises to the chloroplast stroma. In terms of biological role, involved, directly or indirectly, in the processing of the chloroplast encoded psbB mRNA to its mature form, acting via the 5'-UTR of the psbB mRNA. The chain is PsbB mRNA maturation factor Mbb1, chloroplastic (MBB1) from Chlamydomonas reinhardtii (Chlamydomonas smithii).